A 508-amino-acid polypeptide reads, in one-letter code: H/ACA ribonucleoprotein complex subunit 4 (508 aa).

The tract at residues 1–29 (MADVEVRKEKKKKKIKEEPLDGDDIGTLQ) is disordered. Asp-123 functions as the Nucleophile in the catalytic mechanism. A PUA domain is found at 294-369 (HKRIIMKDSS…VVAKIKRVIM (76 aa)). Residues 423–508 (AAQEVSPTNG…KDRDRDEAQE (86 aa)) form a disordered region. The residue at position 442 (Ser-442) is a Phosphoserine. Residues 442–457 (STSSVEETAAAAVSEE) are compositionally biased toward low complexity. Phosphothreonine is present on Thr-443. Residues Ser-444 and Ser-445 each carry the phosphoserine modification. Phosphothreonine is present on Thr-449. Ser-455 is modified (phosphoserine). The residue at position 458 (Thr-458) is a Phosphothreonine. Residues 475-485 (EAPEAAEEEAE) show a composition bias toward acidic residues. Positions 499 to 508 (KDRDRDEAQE) are enriched in basic and acidic residues.

The protein belongs to the pseudouridine synthase TruB family. In terms of assembly, component of the box H/ACA small nucleolar ribonucleoprotein (H/ACA snoRNP) complex consisting of Nop60B, Gar1, NPH2 and Nop10, and associated with H/ACA-type snoRNAs. In terms of tissue distribution, expressed at higher levels in females than in males. Expressed almost exclusively in females with high levels of expression in the ovary.

The protein localises to the nucleus. It localises to the nucleolus. The catalysed reaction is a uridine in RNA = a pseudouridine in RNA. Catalytic subunit of the box H/ACA small nucleolar ribonucleoprotein (H/ACA snoRNP) complex, which catalyzes pseudouridylation of rRNA. This involves the isomerization of uridine such that the ribose is subsequently attached to C5, instead of the normal N1. Pseudouridine ('psi') residues may serve to stabilize the conformation of rRNAs. Required for ribosome biogenesis; plays a central role in ribosomal RNA processing. H/ACA snoRNP complex-dependent ribosome biogenesis is important in female germline cell differentiation during oogenesis. Essential for viability and female fertility. Required for maintenance of the germline stem cell lineage during spermatogenesis. This Drosophila melanogaster (Fruit fly) protein is H/ACA ribonucleoprotein complex subunit 4.